We begin with the raw amino-acid sequence, 473 residues long: MFS transporter prlG (473 aa).

Positions 1–12 (MSSTDAEAKNEE) are enriched in basic and acidic residues. The interval 1–27 (MSSTDAEAKNEEAVDWEGPDDPENPRN) is disordered. Residues 13–22 (AVDWEGPDDP) are compositionally biased toward acidic residues. 11 helical membrane passes run 37 to 57 (VLLVSSFTLYSNLAAVMFAPG), 71 to 91 (IVASLTVSIYILGYVFGPFLL), 101 to 121 (LIIYHICNAVYIAFTIGCALS), 125 to 145 (AMFLVFRFICGCAASAPMAIG), 163 to 183 (ALFGLGPLLGPVIGPVVGGFV), 191 to 211 (WTFWLVLILAGVVSLLALVLM), 266 to 286 (PIVFLLSVYCAFMFGLTYLLF), 305 to 325 (GLAYLGLGVGMIISIGLFAVL), 345 to 365 (LILMIWSSPLVPIGFFWYGWS), 372 to 392 (WIVPILGTSVIGLGAFLILMP), and 409 to 429 (ALAANTVLRSLFGAVLPLAGP).

Belongs to the major facilitator superfamily.

The protein resides in the cell membrane. Its function is as follows. Efflux pump that might be required for efficient secretion of pyrrolocin or other secondary metabolies produced by the pyrrolocin gene cluster. This Fungal sp. (strain NRRL 50135) protein is MFS transporter prlG.